The following is a 156-amino-acid chain: Transcriptional repressor NrdR (156 aa).

Residues 3-34 (CPKCNSTQSKVVDSRHADELNAIRRRRECENC) fold into a zinc finger. The ATP-cone domain maps to 49 to 139 (LIVVKKDGTR…VYKEFKDVDQ (91 aa)).

It belongs to the NrdR family. Zn(2+) is required as a cofactor.

Functionally, negatively regulates transcription of bacterial ribonucleotide reductase nrd genes and operons by binding to NrdR-boxes. This chain is Transcriptional repressor NrdR, found in Staphylococcus aureus (strain NCTC 8325 / PS 47).